Consider the following 348-residue polypeptide: Dihydroorotase (348 aa).

His13 and His15 together coordinate Zn(2+). Substrate contacts are provided by residues 15 to 17 and Asn41; that span reads HLR. Lys99, His136, and His174 together coordinate Zn(2+). Lys99 bears the N6-carboxylysine mark. His136 contacts substrate. A substrate-binding site is contributed by Leu219. Zn(2+) is bound at residue Asp247. Asp247 is an active-site residue. Substrate-binding residues include His251 and Ala263.

It belongs to the metallo-dependent hydrolases superfamily. DHOase family. Class II DHOase subfamily. Homodimer. It depends on Zn(2+) as a cofactor.

It catalyses the reaction (S)-dihydroorotate + H2O = N-carbamoyl-L-aspartate + H(+). It functions in the pathway pyrimidine metabolism; UMP biosynthesis via de novo pathway; (S)-dihydroorotate from bicarbonate: step 3/3. Catalyzes the reversible cyclization of carbamoyl aspartate to dihydroorotate. The chain is Dihydroorotase from Rhizobium etli (strain ATCC 51251 / DSM 11541 / JCM 21823 / NBRC 15573 / CFN 42).